Reading from the N-terminus, the 713-residue chain is MMGSSSQELQTALTDISKTCHHMWEDSKDLQGRFVNDLAELQRLQCTITNFERAQHPEQAFQAKQAMTEMQKKATGVYEMLAQRRNEIISKLNDGANIASMMQGQLINDKLFTWKNAQKLAQIGMPFDDREQLLDEIQLEFEFLADNIWQLNMFACWMCDLCRRAPQLNDGLAQSSAAKLTTISEQLNRLLFVLVSQSFIVSVQPEPVLKTQHKFVTEVRLLIGDKLGIRQQLMNTNVSVKIIAEDEARVMSVDCDAQKEIRANKQVGSISNDFEKLTMDERGHLSAKFNNSKLTRIAHRKPPPKGASDMKCAANMQAATDQKYALLFFITPFQMGNLSKEEQLDVWTLSLPIMVTVHGSQDCDAQVAILWHRAFASISRDPNVHDVTAVSWENLAIMLRNKFSLFTGARRPLSESDLAYLSEKIIIPNMPDQKPITFTRFAKQAMREELAFSFWEWFFSIMQLIKQKLLKYWDEGWCIGFISKHDASQSMCMLPNTSFLLRFSDTQTGAVSIGFVCQDDDGQKVPFHLSPLTIKDLDQLSLASRIASCPQLKDIRYMYPNIDKEEMLRYFESEERHRVGGPESPGGYIQSEIVMVAKTNGNFRRASAAPSMFGADSPSPLSIQSKLDWSPGEIHQSMMEMTDELGHVLNVGGMDSMHPDANTLLGPAFKNPTFHPHDQQQHLQFVDMSHPQMMQQQHHGHNHNHTHNQFYPS.

An SH2 domain is found at 477-574 (WCIGFISKHD…EEMLRYFESE (98 aa)).

This sequence belongs to the transcription factor STAT family. As to quaternary structure, forms a homodimer or a heterodimer with a related family member.

It localises to the cytoplasm. It is found in the nucleus. Carries out a dual function: signal transduction and activation of transcription. Activated STAT proteins play a role in repression of dauer formation. Neuronal expression is held in check by negative signals through the TGF-beta pathway that target the daf-3 transcription factor. This is Signal transducer and activator of transcription 1 from Caenorhabditis briggsae.